The chain runs to 656 residues: Acyl-CoA-binding domain-containing protein 6 (656 aa).

Residues 8-102 (YPDRFYAAAA…LEEEDPGWYS (95 aa)) form the ACB domain. Residues 44-48 (YGLYQ) and K70 contribute to the an acyl-CoA site. Residues 129-148 (ASTNGTSVPEPKTISENGSS) form a disordered region. Kelch repeat units lie at residues 194-241 (KMYI…AQVS), 254-304 (KFFS…LVGT), 305-354 (TLVL…CHAD), 356-405 (YLLI…TVGE), 406-454 (NWYI…LVHS), and 461-507 (YLIS…EPEV). A coiled-coil region spans residues 527-636 (LKKDDANELL…EQAALEAKQR (110 aa)). Residues 627–656 (EQAALEAKQRQSSSGMWGWLVGTPPDKSES) are disordered.

This sequence belongs to the ACBP family. Highly expressed in leaves. Expressed in roots and seeds.

The protein localises to the peroxisome. In terms of biological role, binds medium- and long-chain acyl-CoA esters with high affinity. Can interact in vitro with linoleoyl-CoA and linolenoyl-CoA. Binds phosphatidic acid (PA) and phosphatidylcholine (PC) in vitro. May play a role in the biosynthesis of phospholipids. May be involved in lipid degradation via peroxisomal beta-oxydation. This Oryza sativa subsp. japonica (Rice) protein is Acyl-CoA-binding domain-containing protein 6.